A 379-amino-acid polypeptide reads, in one-letter code: Cytochrome b (379 aa).

The next 4 helical transmembrane spans lie at 33-53, 77-98, 113-133, and 178-198; these read FGSLLGICLILQILTGLFLAM, WMIRYMHANGASLFFICLFMHV, WNIGILLLLTVMATAFMGYVL, and FFAFHFILPFIISALAAVHLL. Residues His-83 and His-97 each coordinate heme b. Heme b is bound by residues His-182 and His-196. His-201 lines the a ubiquinone pocket. A run of 4 helical transmembrane segments spans residues 226-246, 288-308, 320-340, and 347-367; these read IKDILGLLFLILALMLLVLFS, LGGVLPHAMSILILPIIPMLH, LSQCMFWLLVADLPILTWIGG, and FITIGQLASVYISSILLXLMP.

The protein belongs to the cytochrome b family. As to quaternary structure, the cytochrome bc1 complex contains 11 subunits: 3 respiratory subunits (MT-CYB, CYC1 and UQCRFS1), 2 core proteins (UQCRC1 and UQCRC2) and 6 low-molecular weight proteins (UQCRH/QCR6, UQCRB/QCR7, UQCRQ/QCR8, UQCR10/QCR9, UQCR11/QCR10 and a cleavage product of UQCRFS1). This cytochrome bc1 complex then forms a dimer. Heme b serves as cofactor.

It is found in the mitochondrion inner membrane. Functionally, component of the ubiquinol-cytochrome c reductase complex (complex III or cytochrome b-c1 complex) that is part of the mitochondrial respiratory chain. The b-c1 complex mediates electron transfer from ubiquinol to cytochrome c. Contributes to the generation of a proton gradient across the mitochondrial membrane that is then used for ATP synthesis. The chain is Cytochrome b (MT-CYB) from Chrotogale owstoni (Owston's palm civet).